The chain runs to 439 residues: Probable anion transporter 7 (439 aa).

A signal peptide spans 1–28 (MTALTRMKFPKRYVIVLLTFICTNVCYI). Transmembrane regions (helical) follow at residues 53-73 (MILS…GWAA), 81-101 (VLLL…LDPK), 104-124 (VILV…FPAI), 143-163 (LTTS…PSLV), 167-187 (GAQS…VIWL), 232-252 (IIFS…HYAL), 280-300 (LPYF…DHLI), 312-332 (KLLN…LPLF), 338-358 (TVLC…GFAV), 367-387 (FAGI…IVGV), and 412-432 (TVFF…LIFS).

The protein belongs to the major facilitator superfamily. Sodium/anion cotransporter (TC 2.A.1.14) family.

The protein localises to the cell membrane. Its function is as follows. Probable anion transporter. The polypeptide is Probable anion transporter 7 (PHT4;7) (Oryza sativa subsp. japonica (Rice)).